A 313-amino-acid chain; its full sequence is Alpha/beta-gliadin clone PW8142 (313 aa).

The N-terminal stretch at 1–20 is a signal peptide; sequence MKTFLILALVATTATTAVRV. A compositionally biased stretch (low complexity) spans 22 to 55; the sequence is VPQLQPKNPSQQQPQEQVPLVQQQQFPGQQQQFP. Disordered stretches follow at residues 22-122 and 234-272; these read VPQL…QQAQ and QQPS…VQPQ. Composition is skewed to pro residues over residues 56–68 and 78–101; these read PQQP…PFPS and FPQP…PQQP. 2 stretches are compositionally biased toward low complexity: residues 102–122 and 234–264; these read YPQQ…QQAQ and QQPS…QNPQ.

It belongs to the gliadin/glutenin family. Substrate of transglutaminase.

Functionally, gliadin is the major seed storage protein in wheat. This Triticum aestivum (Wheat) protein is Alpha/beta-gliadin clone PW8142.